The following is an 880-amino-acid chain: Inner centromere protein (880 aa).

The segment at 52-104 (EPELMPKTPSQKNRRKKRRVSNIQDENRDPVRKRLSRRKSRSSQVGTRHLRSK) is disordered. Serine 72, serine 142, and serine 147 each carry phosphoserine. Threonine 149 and threonine 189 each carry phosphothreonine. The tract at residues 175–229 (KGSLPPSPVSQGTLTSEEELTPKKSEAGKLDSVTVNSLKATPQSPKNRGVGEGRS) is disordered. Residue serine 190 is modified to Phosphoserine. The span at 194–203 (LTPKKSEAGK) shows a compositional bias: basic and acidic residues. 2 positions are modified to phosphothreonine: threonine 195 and threonine 215. The span at 207 to 220 (VTVNSLKATPQSPK) shows a compositional bias: polar residues. Phosphoserine is present on residues serine 218, serine 239, serine 245, serine 248, serine 251, and serine 259. Threonine 270 is subject to Phosphothreonine. Residues serine 284 and serine 290 each carry the phosphoserine modification. 2 disordered regions span residues 303-322 (KQEN…AGKE) and 350-461 (EQEP…PANK). Acidic residues predominate over residues 352 to 366 (EPVEVAEPEEAEEEQ). Serine 376 is modified (phosphoserine). Threonine 382 carries the post-translational modification Phosphothreonine. The span at 385–402 (AISTPTSKPAAAGQTTTV) shows a compositional bias: polar residues. Serine 421 carries the phosphoserine modification. Acidic residues predominate over residues 434–445 (EPDEEQLEDEEL). Residue asparagine 450 is glycosylated (N-linked (GlcNAc...) asparagine). Threonine 452 carries the phosphothreonine modification. Serine 454 and serine 488 each carry phosphoserine. The interval 506–733 (KCSFVEKERQ…EEKKRKEEQQ (228 aa)) is SAH. The stretch at 506-759 (KCSFVEKERQ…EVAAARKVLN (254 aa)) forms a coiled coil. Disordered regions lie at residues 513 to 541 (ERQR…KRRR), 563 to 617 (VEQM…KQEE), 629 to 713 (EEER…KALR), and 775 to 813 (TPQG…IPSW). Composition is skewed to basic and acidic residues over residues 563–596 (VEQM…LAEK), 604–617 (KKME…KQEE), and 630–713 (EERR…KALR). The tract at residues 794–868 (LNSDDSTDDE…RTSSAVWNSP (75 aa)) is IN box. A phosphoserine mark is found at serine 796 and serine 799. At threonine 800 the chain carries Phosphothreonine. Threonine 860 bears the Phosphothreonine; by AURKB mark. Phosphoserine occurs at positions 861, 862, and 867.

This sequence belongs to the INCENP family. In terms of assembly, component of the chromosomal passenger complex (CPC) composed of at least BIRC5/survivin, CDCA8/borealin, INCENP, AURKB or AURKC; in the complex binds directly to AURKB or AURKC via the IN box, and forms a triple-helix bundle-based subcomplex with BIRC5 and CDCA8 via its N-terminus. The reported homodimerization is questioned as the SAH domain is shown to be monomeric. Interacts with H2AZ1. Interacts with CBX1 and CBX3. Interacts with tubulin beta chain. Interacts with EVI5. Interacts with CBX5; POGZ and INCENP compete for interaction with CBX5. Interacts with POGZ. Interacts with JTB. In terms of processing, phosphorylation by AURKB at its C-terminal part is important for AURKB activation by INCENP.

It localises to the chromosome. The protein resides in the centromere. It is found in the cytoplasm. The protein localises to the cytoskeleton. Its subcellular location is the spindle. It localises to the nucleus. The protein resides in the kinetochore. It is found in the midbody. In terms of biological role, component of the chromosomal passenger complex (CPC), a complex that acts as a key regulator of mitosis. The CPC complex has essential functions at the centromere in ensuring correct chromosome alignment and segregation and is required for chromatin-induced microtubule stabilization and spindle assembly. Acts as a scaffold regulating CPC localization and activity. The C-terminus associates with AURKB or AURKC, the N-terminus associated with BIRC5/survivin and CDCA8/borealin tethers the CPC to the inner centromere, and the microtubule binding activity within the central SAH domain directs AURKB/C toward substrates near microtubules. The flexibility of the SAH domain is proposed to allow AURKB/C to follow substrates on dynamic microtubules while ensuring CPC docking to static chromatin. Activates AURKB and AURKC. Controls the kinetochore localization of BUB1. In Mus musculus (Mouse), this protein is Inner centromere protein (Incenp).